The sequence spans 221 residues: Thiamine-phosphate synthase (221 aa).

Residues 47-51 and N79 each bind 4-amino-2-methyl-5-(diphosphooxymethyl)pyrimidine; that span reads QYREK. Mg(2+) is bound by residues D80 and D99. T118 contacts 4-amino-2-methyl-5-(diphosphooxymethyl)pyrimidine. 144–146 is a binding site for 2-[(2R,5Z)-2-carboxy-4-methylthiazol-5(2H)-ylidene]ethyl phosphate; sequence SFT. A 4-amino-2-methyl-5-(diphosphooxymethyl)pyrimidine-binding site is contributed by K147. 2-[(2R,5Z)-2-carboxy-4-methylthiazol-5(2H)-ylidene]ethyl phosphate-binding positions include G175 and 195 to 196; that span reads VT.

This sequence belongs to the thiamine-phosphate synthase family. Requires Mg(2+) as cofactor.

The enzyme catalyses 2-[(2R,5Z)-2-carboxy-4-methylthiazol-5(2H)-ylidene]ethyl phosphate + 4-amino-2-methyl-5-(diphosphooxymethyl)pyrimidine + 2 H(+) = thiamine phosphate + CO2 + diphosphate. It catalyses the reaction 2-(2-carboxy-4-methylthiazol-5-yl)ethyl phosphate + 4-amino-2-methyl-5-(diphosphooxymethyl)pyrimidine + 2 H(+) = thiamine phosphate + CO2 + diphosphate. It carries out the reaction 4-methyl-5-(2-phosphooxyethyl)-thiazole + 4-amino-2-methyl-5-(diphosphooxymethyl)pyrimidine + H(+) = thiamine phosphate + diphosphate. It functions in the pathway cofactor biosynthesis; thiamine diphosphate biosynthesis; thiamine phosphate from 4-amino-2-methyl-5-diphosphomethylpyrimidine and 4-methyl-5-(2-phosphoethyl)-thiazole: step 1/1. In terms of biological role, condenses 4-methyl-5-(beta-hydroxyethyl)thiazole monophosphate (THZ-P) and 2-methyl-4-amino-5-hydroxymethyl pyrimidine pyrophosphate (HMP-PP) to form thiamine monophosphate (TMP). This is Thiamine-phosphate synthase from Caldicellulosiruptor saccharolyticus (strain ATCC 43494 / DSM 8903 / Tp8T 6331).